Here is a 317-residue protein sequence, read N- to C-terminus: Melanocyte-stimulating hormone receptor (317 aa).

Topologically, residues 1 to 37 are extracellular; it reads MPAQGSQRGLLGAVNFTPTATPHLRPAANQTGPQCLE. Asn29 carries an N-linked (GlcNAc...) asparagine glycan. A helical transmembrane segment spans residues 38–63; the sequence is VSVPDGLFLCLGLVSLVENTLVVAAI. Topologically, residues 64–72 are cytoplasmic; sequence AKNRNLHSP. A helical membrane pass occupies residues 73 to 93; that stretch reads MYCFICCLALSDLLVSVSNLL. The Extracellular portion of the chain corresponds to 94-118; sequence ETAVLLLLEVGALAAQATVVQQLGN. The helical transmembrane segment at 119-140 threads the bilayer; the sequence is VIDVLICSSMVSSLCSLGAIAM. The Cytoplasmic segment spans residues 141–163; sequence DRYISIFYALRYHSIVTLARARR. A helical membrane pass occupies residues 164–183; the sequence is AIAAVWAASILSSTLFITYY. At 184-191 the chain is on the extracellular side; it reads DRTAALLC. Residues 192–211 form a helical membrane-spanning segment; that stretch reads LVVFFLAMLVLMALLYVHML. Over 212 to 240 the chain is Cytoplasmic; that stretch reads IQACQHAQAIARLHKRQHPVQQGWGLKGA. The chain crosses the membrane as a helical span at residues 241 to 266; sequence ATLTILLGVFFLCWGPFFLHLTLIAV. At 267 to 279 the chain is on the extracellular side; it reads CPQHPTCSCIFKN. A helical membrane pass occupies residues 280–300; sequence FRLFLALIICNTIVDPLIYAF. The Cytoplasmic portion of the chain corresponds to 301-317; it reads RSQELRRTLKEVLLFSW.

Belongs to the G-protein coupled receptor 1 family. As to quaternary structure, interacts with MGRN1, but does not undergo MGRN1-mediated ubiquitination; this interaction competes with GNAS-binding and thus inhibits agonist-induced cAMP production. Interacts with OPN3; the interaction results in a decrease in MC1R-mediated cAMP signaling and ultimately a decrease in melanin production in melanocytes.

The protein resides in the cell membrane. Receptor for MSH (alpha, beta and gamma) and ACTH. The activity of this receptor is mediated by G proteins which activate adenylate cyclase. Mediates melanogenesis, the production of eumelanin (black/brown) and phaeomelanin (red/yellow), via regulation of cAMP signaling in melanocytes. The polypeptide is Melanocyte-stimulating hormone receptor (MC1R) (Eulemur fulvus fulvus (Brown lemur)).